The sequence spans 273 residues: Shikimate dehydrogenase (NADP(+)) (273 aa).

Shikimate contacts are provided by residues 15-17 (SQS) and Thr-62. Catalysis depends on Lys-66, which acts as the Proton acceptor. Glu-78 contributes to the NADP(+) binding site. Shikimate contacts are provided by Asn-87 and Asp-102. NADP(+) is bound by residues 127 to 131 (GAGGA), 151 to 156 (NRTVIK), and Met-215. Tyr-217 serves as a coordination point for shikimate. Gly-239 contacts NADP(+).

The protein belongs to the shikimate dehydrogenase family. As to quaternary structure, homodimer.

The enzyme catalyses shikimate + NADP(+) = 3-dehydroshikimate + NADPH + H(+). The protein operates within metabolic intermediate biosynthesis; chorismate biosynthesis; chorismate from D-erythrose 4-phosphate and phosphoenolpyruvate: step 4/7. Its function is as follows. Involved in the biosynthesis of the chorismate, which leads to the biosynthesis of aromatic amino acids. Catalyzes the reversible NADPH linked reduction of 3-dehydroshikimate (DHSA) to yield shikimate (SA). This chain is Shikimate dehydrogenase (NADP(+)), found in Chromobacterium violaceum (strain ATCC 12472 / DSM 30191 / JCM 1249 / CCUG 213 / NBRC 12614 / NCIMB 9131 / NCTC 9757 / MK).